Reading from the N-terminus, the 343-residue chain is tRNA N6-adenosine threonylcarbamoyltransferase (343 aa).

Fe cation contacts are provided by His115 and His119. Residues 137–141 (LVSGG), Asp170, Gly183, Asp187, and Asn276 each bind substrate. A Fe cation-binding site is contributed by Asp306.

The protein belongs to the KAE1 / TsaD family. The cofactor is Fe(2+).

It is found in the cytoplasm. It catalyses the reaction L-threonylcarbamoyladenylate + adenosine(37) in tRNA = N(6)-L-threonylcarbamoyladenosine(37) in tRNA + AMP + H(+). In terms of biological role, required for the formation of a threonylcarbamoyl group on adenosine at position 37 (t(6)A37) in tRNAs that read codons beginning with adenine. Is involved in the transfer of the threonylcarbamoyl moiety of threonylcarbamoyl-AMP (TC-AMP) to the N6 group of A37, together with TsaE and TsaB. TsaD likely plays a direct catalytic role in this reaction. The chain is tRNA N6-adenosine threonylcarbamoyltransferase from Limosilactobacillus reuteri (strain DSM 20016) (Lactobacillus reuteri).